Here is a 68-residue protein sequence, read N- to C-terminus: MLGDISKPHHTWSPSCVKISPDSPDPHPISRMKLHGCRFKSSNALSVIFAWICCTLVEPVYLCASLSL.

This is an uncharacterized protein from Saccharomyces cerevisiae (strain ATCC 204508 / S288c) (Baker's yeast).